We begin with the raw amino-acid sequence, 235 residues long: Lipoprotein signal peptidase (235 aa).

The disordered stretch occupies residues 1 to 23 (MTDETSGPAEPVTDAPGDAESPA). The next 3 helical transmembrane spans lie at 31–51 (LLLTVAAVVLFLDVVTKVLAV), 84–104 (GYTWVLTLVATGVVIGIIWMG), and 108–128 (VSPWWALGLGLILGGATGNLV). Catalysis depends on residues Asp-144 and Asp-158. A helical membrane pass occupies residues 156–176 (VADPSVVGGAILLVALSLFGF). Positions 185 to 235 (RPGEDAEPSAGASDSTPEAPAADGPDKPAGPVGPEDAAEESKTVGHQAEPS) are disordered. Residues 201 to 218 (PEAPAADGPDKPAGPVGP) are compositionally biased toward low complexity.

This sequence belongs to the peptidase A8 family.

Its subcellular location is the cell membrane. It carries out the reaction Release of signal peptides from bacterial membrane prolipoproteins. Hydrolyzes -Xaa-Yaa-Zaa-|-(S,diacylglyceryl)Cys-, in which Xaa is hydrophobic (preferably Leu), and Yaa (Ala or Ser) and Zaa (Gly or Ala) have small, neutral side chains.. It functions in the pathway protein modification; lipoprotein biosynthesis (signal peptide cleavage). In terms of biological role, this protein specifically catalyzes the removal of signal peptides from prolipoproteins. This Mycolicibacterium smegmatis (strain ATCC 700084 / mc(2)155) (Mycobacterium smegmatis) protein is Lipoprotein signal peptidase.